Reading from the N-terminus, the 387-residue chain is Cysteine desulfurase IscS (387 aa).

Pyridoxal 5'-phosphate is bound by residues 73–74 (AT), Asn155, Gln183, and 203–205 (SAH). Lys206 carries the post-translational modification N6-(pyridoxal phosphate)lysine. Thr241 serves as a coordination point for pyridoxal 5'-phosphate. Cys328 (cysteine persulfide intermediate) is an active-site residue. Cys328 contacts [2Fe-2S] cluster.

It belongs to the class-V pyridoxal-phosphate-dependent aminotransferase family. NifS/IscS subfamily. As to quaternary structure, homodimer. Forms a heterotetramer with IscU, interacts with other sulfur acceptors. Pyridoxal 5'-phosphate is required as a cofactor.

The protein resides in the cytoplasm. The enzyme catalyses (sulfur carrier)-H + L-cysteine = (sulfur carrier)-SH + L-alanine. It participates in cofactor biosynthesis; iron-sulfur cluster biosynthesis. Master enzyme that delivers sulfur to a number of partners involved in Fe-S cluster assembly, tRNA modification or cofactor biosynthesis. Catalyzes the removal of elemental sulfur atoms from cysteine to produce alanine. Functions as a sulfur delivery protein for Fe-S cluster synthesis onto IscU, an Fe-S scaffold assembly protein, as well as other S acceptor proteins. The protein is Cysteine desulfurase IscS of Helicobacter pylori (strain Shi470).